Here is a 401-residue protein sequence, read N- to C-terminus: Phosphoglycerate kinase (401 aa).

Substrate is bound by residues 23-25, Arg38, 61-64, Arg120, and Arg153; these read DLN and HFGR. ATP contacts are provided by residues Lys203, Glu325, and 355 to 358; that span reads GGDT.

This sequence belongs to the phosphoglycerate kinase family. Monomer.

The protein resides in the cytoplasm. It carries out the reaction (2R)-3-phosphoglycerate + ATP = (2R)-3-phospho-glyceroyl phosphate + ADP. The protein operates within carbohydrate degradation; glycolysis; pyruvate from D-glyceraldehyde 3-phosphate: step 2/5. This chain is Phosphoglycerate kinase, found in Rhizobium johnstonii (strain DSM 114642 / LMG 32736 / 3841) (Rhizobium leguminosarum bv. viciae).